The following is a 509-amino-acid chain: Ceramide glucosyltransferase (509 aa).

Over 1–42 (MIMQLGLTSLAFLALKCDAYNIAPKIDTPNVEPFAPSGGLKL) the chain is Lumenal. Residues 43 to 63 (LAIVAIIWYVVVLLVAYYGFF) form a helical membrane-spanning segment. Over 64–384 (EIMQKFSKRK…EATLLEPTTE (321 aa)) the chain is Cytoplasmic. Position 123 (Asp123) is a short sequence motif, D1. Residue Asp179 is a short sequence motif, D2. Residue Asp321 is a short sequence motif, D3. Catalysis depends on Asp321, which acts as the Proton acceptor. Residues 361–365 (RRIRW) carry the (Q/R)XXRW motif. The helical transmembrane segment at 385–405 (CLLCGTFGTFAISTLFLQSYF) threads the bilayer. Residues 406-408 (NWK) lie on the Lumenal side of the membrane. The chain crosses the membrane as a helical span at residues 409–429 (FFIFHLLVWMVTDYTQFHILL). Over 430-466 (TNASQDTATCNVPYFAEPNFNAYGSPFESSNLRTFHR) the chain is Cytoplasmic. A helical transmembrane segment spans residues 467-487 (WVLYWLLREVLALPIWISAML). The Lumenal portion of the chain corresponds to 488-509 (GTRIIWRNRPFRINVDLSAEEL).

Belongs to the glycosyltransferase 2 family.

The protein resides in the golgi apparatus membrane. The catalysed reaction is an N-acylsphing-4-enine + UDP-alpha-D-glucose = a beta-D-glucosyl-(1&lt;-&gt;1')-N-acylsphing-4-enine + UDP + H(+). It functions in the pathway lipid metabolism; sphingolipid metabolism. Catalyzes the final step in the biosynthesis of the membrane lipid glucosylceramide (GluCer), the transfer of glucose to ceramide. Glucosylceramides play important roles in growth, differentiation and pathogenicity. The chain is Ceramide glucosyltransferase from Komagataella phaffii (strain GS115 / ATCC 20864) (Yeast).